A 739-amino-acid polypeptide reads, in one-letter code: Phosphoribosylformylglycinamidine synthase subunit PurL (739 aa).

H54 is an active-site residue. ATP is bound by residues Y57 and K96. Mg(2+) is bound at residue E98. Substrate is bound by residues 99–102 (SHNH) and R121. The active-site Proton acceptor is H100. D122 is a binding site for Mg(2+). Q245 contacts substrate. D273 is a binding site for Mg(2+). Position 317 to 319 (317 to 319 (ESQ)) interacts with substrate. 2 residues coordinate ATP: D500 and G537. Residue N538 participates in Mg(2+) binding. A substrate-binding site is contributed by S540.

This sequence belongs to the FGAMS family. As to quaternary structure, monomer. Part of the FGAM synthase complex composed of 1 PurL, 1 PurQ and 2 PurS subunits.

The protein localises to the cytoplasm. The enzyme catalyses N(2)-formyl-N(1)-(5-phospho-beta-D-ribosyl)glycinamide + L-glutamine + ATP + H2O = 2-formamido-N(1)-(5-O-phospho-beta-D-ribosyl)acetamidine + L-glutamate + ADP + phosphate + H(+). It participates in purine metabolism; IMP biosynthesis via de novo pathway; 5-amino-1-(5-phospho-D-ribosyl)imidazole from N(2)-formyl-N(1)-(5-phospho-D-ribosyl)glycinamide: step 1/2. In terms of biological role, part of the phosphoribosylformylglycinamidine synthase complex involved in the purines biosynthetic pathway. Catalyzes the ATP-dependent conversion of formylglycinamide ribonucleotide (FGAR) and glutamine to yield formylglycinamidine ribonucleotide (FGAM) and glutamate. The FGAM synthase complex is composed of three subunits. PurQ produces an ammonia molecule by converting glutamine to glutamate. PurL transfers the ammonia molecule to FGAR to form FGAM in an ATP-dependent manner. PurS interacts with PurQ and PurL and is thought to assist in the transfer of the ammonia molecule from PurQ to PurL. The polypeptide is Phosphoribosylformylglycinamidine synthase subunit PurL (Bacillus cereus (strain ATCC 10987 / NRS 248)).